A 314-amino-acid polypeptide reads, in one-letter code: tRNA dimethylallyltransferase (314 aa).

12-19 (GPTASGKT) serves as a coordination point for ATP. 14–19 (TASGKT) provides a ligand contact to substrate. Interaction with substrate tRNA stretches follow at residues 37–40 (DSAL), 161–165 (QRIQR), and 244–249 (RCVGYR).

The protein belongs to the IPP transferase family. Monomer. Mg(2+) serves as cofactor.

The enzyme catalyses adenosine(37) in tRNA + dimethylallyl diphosphate = N(6)-dimethylallyladenosine(37) in tRNA + diphosphate. In terms of biological role, catalyzes the transfer of a dimethylallyl group onto the adenine at position 37 in tRNAs that read codons beginning with uridine, leading to the formation of N6-(dimethylallyl)adenosine (i(6)A). This Janthinobacterium sp. (strain Marseille) (Minibacterium massiliensis) protein is tRNA dimethylallyltransferase.